A 377-amino-acid chain; its full sequence is All-trans-retinol dehydrogenase [NAD(+)] ADH4 (377 aa).

Cys-47 is a binding site for Zn(2+). 48-49 is an NAD(+) binding site; sequence PT. Residues His-68, Cys-98, Cys-101, Cys-104, Cys-112, and Cys-179 each coordinate Zn(2+). NAD(+) is bound by residues 204–209, Asp-228, Lys-233, 297–299, 320–322, and Arg-372; these read GLGCVG, VGA, and TFF.

The protein belongs to the zinc-containing alcohol dehydrogenase family. Class-II subfamily. In terms of assembly, dimer. It depends on Zn(2+) as a cofactor. As to expression, liver specific.

The protein localises to the cytoplasm. It catalyses the reaction all-trans-retinol + NAD(+) = all-trans-retinal + NADH + H(+). It carries out the reaction 9-cis-retinol + NAD(+) = 9-cis-retinal + NADH + H(+). The enzyme catalyses 20-oxo-(5Z,8Z,11Z,14Z)-eicosatetraenoate + NAD(+) + H2O = (5Z,8Z,11Z,14Z)-eicosatetraenedioate + NADH + 2 H(+). The catalysed reaction is 20-hydroxy-(5Z,8Z,11Z,14Z)-eicosatetraenoate + NAD(+) = 20-oxo-(5Z,8Z,11Z,14Z)-eicosatetraenoate + NADH + H(+). It catalyses the reaction 1,4-benzoquinone + NADH + H(+) = hydroquinone + NAD(+). Its activity is regulated as follows. Oxidation of 20-HETE is inhibited by low concentrations of N-heptylformamide. Oxidation of 20-HETE is a decreased by 55-65% by either all-trans-retinol or all-trans-retinoic acid. Strongly inhibited by omega-hydroxy fatty acids. In terms of biological role, catalyzes the NAD-dependent oxidation of either all-trans-retinol or 9-cis-retinol. Also oxidizes long chain omega-hydroxy fatty acids, such as 20-HETE, producing both the intermediate aldehyde, 20-oxoarachidonate and the end product, a dicarboxylic acid, (5Z,8Z,11Z,14Z)-eicosatetraenedioate. Also catalyzes the reduction of benzoquinones. The chain is All-trans-retinol dehydrogenase [NAD(+)] ADH4 from Rattus norvegicus (Rat).